The chain runs to 548 residues: Terpene synthase 1 (548 aa).

Mg(2+) contacts are provided by Asp301, Asp305, Asp445, and Glu453. The DDXXD motif motif lies at 301–305; the sequence is DDTYD.

The protein belongs to the terpene synthase family. Tpsa subfamily. Mg(2+) is required as a cofactor. Mn(2+) serves as cofactor.

It catalyses the reaction (2E,6E)-farnesyl diphosphate = (+)-valencene + diphosphate. The protein operates within secondary metabolite biosynthesis; terpenoid biosynthesis. Sesquiterpene synthase involved in the biosynthesis of volatile compounds which contribute to fruit flavor and aroma. Mediates the conversion of (2E,6E)-farnesyl diphosphate (FPP) into (+)-valencene. No activity detected with geranyl diphosphate (GPP). In Citrus sinensis (Sweet orange), this protein is Terpene synthase 1.